A 341-amino-acid polypeptide reads, in one-letter code: Nucleoid-associated protein Sden_2335 (341 aa).

This sequence belongs to the YejK family.

Its subcellular location is the cytoplasm. The protein resides in the nucleoid. In Shewanella denitrificans (strain OS217 / ATCC BAA-1090 / DSM 15013), this protein is Nucleoid-associated protein Sden_2335.